The primary structure comprises 141 residues: Large ribosomal subunit protein uL11 (141 aa).

The protein belongs to the universal ribosomal protein uL11 family. As to quaternary structure, part of the ribosomal stalk of the 50S ribosomal subunit. Interacts with L10 and the large rRNA to form the base of the stalk. L10 forms an elongated spine to which L12 dimers bind in a sequential fashion forming a multimeric L10(L12)X complex. Post-translationally, one or more lysine residues are methylated.

Forms part of the ribosomal stalk which helps the ribosome interact with GTP-bound translation factors. In Crocosphaera subtropica (strain ATCC 51142 / BH68) (Cyanothece sp. (strain ATCC 51142)), this protein is Large ribosomal subunit protein uL11.